A 155-amino-acid chain; its full sequence is Regulatory protein RecX (155 aa).

This sequence belongs to the RecX family.

It is found in the cytoplasm. Modulates RecA activity. This is Regulatory protein RecX from Pseudomonas fluorescens (strain ATCC BAA-477 / NRRL B-23932 / Pf-5).